We begin with the raw amino-acid sequence, 376 residues long: Ribonucleoside-diphosphate reductase 1 subunit beta (376 aa).

Positions 85, 116, and 119 each coordinate Fe cation. Tyr123 is an active-site residue. Fe cation contacts are provided by Glu205, Glu239, and His242.

This sequence belongs to the ribonucleoside diphosphate reductase small chain family. As to quaternary structure, tetramer of two alpha (R1) and two beta (R2) subunits. The B1 protein is a dimer of alpha subunits. A radical transfer pathway occurs between Tyr-123 of R2 and R1. It depends on Fe cation as a cofactor.

The catalysed reaction is a 2'-deoxyribonucleoside 5'-diphosphate + [thioredoxin]-disulfide + H2O = a ribonucleoside 5'-diphosphate + [thioredoxin]-dithiol. In terms of biological role, provides the precursors necessary for DNA synthesis. Catalyzes the biosynthesis of deoxyribonucleotides from the corresponding ribonucleotides. R2 contains the tyrosyl radical required for catalysis. This is Ribonucleoside-diphosphate reductase 1 subunit beta (nrdB) from Salmonella typhimurium (strain LT2 / SGSC1412 / ATCC 700720).